A 347-amino-acid chain; its full sequence is MNPLVFTMIMSTVMLGTAIVATSSHWLMAWIGFEMNMLAVIPILMKKYNPRSMEASTKYFLTQATASMLLMLAVTMNLVYSGQWSITKPLNPTASTIMTLAMAMKLGLSPFHFWVPEVTQGISLPSGLILLTWQKLAPMSILYQISPPINLDLLMMLINLSIAIGGWGGLNQTQLRKIMAYSSIAHMGWMTAILTYNPTMTLLNLMIYILLTTTTFMMFMLSSTTTTLSLSHTWNKMPLLTTAILLTMLSLGGLPPLSGFMPKWMIIQELTKNNSVIMPTTMAVMALLNLYFYMRLTYSTSLTMFPSTNNMKMKWQFNYTKSTTHLSPLIILSTLILPLSPMLALLE.

Transmembrane regions (helical) follow at residues 1–21 (MNPL…AIVA), 25–45 (HWLM…PILM), 59–79 (YFLT…MNLV), 111–131 (FHFW…LILL), 149–169 (INLD…GWGG), 178–198 (IMAY…TYNP), 201–221 (TLLN…MFML), 237–257 (MPLL…LPPL), 274–294 (NSVI…YFYM), and 326–346 (LSPL…LALL).

This sequence belongs to the complex I subunit 2 family. Core subunit of respiratory chain NADH dehydrogenase (Complex I) which is composed of 45 different subunits. Interacts with TMEM242.

It localises to the mitochondrion inner membrane. It carries out the reaction a ubiquinone + NADH + 5 H(+)(in) = a ubiquinol + NAD(+) + 4 H(+)(out). Core subunit of the mitochondrial membrane respiratory chain NADH dehydrogenase (Complex I) which catalyzes electron transfer from NADH through the respiratory chain, using ubiquinone as an electron acceptor. Essential for the catalytic activity and assembly of complex I. In Pteropus rodricensis (Rodriguez flying fox), this protein is NADH-ubiquinone oxidoreductase chain 2.